We begin with the raw amino-acid sequence, 216 residues long: Imidazole glycerol phosphate synthase subunit HisH (216 aa).

Positions 2–216 (RVAIIDYGSG…LITNFLRWRP (215 aa)) constitute a Glutamine amidotransferase type-1 domain. The active-site Nucleophile is the Cys88. Catalysis depends on residues His196 and Glu198.

Heterodimer of HisH and HisF.

It is found in the cytoplasm. The catalysed reaction is 5-[(5-phospho-1-deoxy-D-ribulos-1-ylimino)methylamino]-1-(5-phospho-beta-D-ribosyl)imidazole-4-carboxamide + L-glutamine = D-erythro-1-(imidazol-4-yl)glycerol 3-phosphate + 5-amino-1-(5-phospho-beta-D-ribosyl)imidazole-4-carboxamide + L-glutamate + H(+). The enzyme catalyses L-glutamine + H2O = L-glutamate + NH4(+). It functions in the pathway amino-acid biosynthesis; L-histidine biosynthesis; L-histidine from 5-phospho-alpha-D-ribose 1-diphosphate: step 5/9. IGPS catalyzes the conversion of PRFAR and glutamine to IGP, AICAR and glutamate. The HisH subunit catalyzes the hydrolysis of glutamine to glutamate and ammonia as part of the synthesis of IGP and AICAR. The resulting ammonia molecule is channeled to the active site of HisF. The protein is Imidazole glycerol phosphate synthase subunit HisH of Mesorhizobium japonicum (strain LMG 29417 / CECT 9101 / MAFF 303099) (Mesorhizobium loti (strain MAFF 303099)).